Reading from the N-terminus, the 191-residue chain is Orotate phosphoribosyltransferase (191 aa).

114–122 (EDVVTTGKS) is a 5-phospho-alpha-D-ribose 1-diphosphate binding site. Residues Thr-118 and Arg-146 each contribute to the orotate site.

The protein belongs to the purine/pyrimidine phosphoribosyltransferase family. PyrE subfamily. As to quaternary structure, homodimer. Requires Mg(2+) as cofactor.

The enzyme catalyses orotidine 5'-phosphate + diphosphate = orotate + 5-phospho-alpha-D-ribose 1-diphosphate. The protein operates within pyrimidine metabolism; UMP biosynthesis via de novo pathway; UMP from orotate: step 1/2. Catalyzes the transfer of a ribosyl phosphate group from 5-phosphoribose 1-diphosphate to orotate, leading to the formation of orotidine monophosphate (OMP). The chain is Orotate phosphoribosyltransferase from Clostridium botulinum (strain Kyoto / Type A2).